The chain runs to 78 residues: DNA-directed RNA polymerase subunit Rpo5 (78 aa).

This sequence belongs to the archaeal Rpo5/eukaryotic RPB5 RNA polymerase subunit family. As to quaternary structure, part of the RNA polymerase complex.

Its subcellular location is the cytoplasm. It carries out the reaction RNA(n) + a ribonucleoside 5'-triphosphate = RNA(n+1) + diphosphate. Functionally, DNA-dependent RNA polymerase (RNAP) catalyzes the transcription of DNA into RNA using the four ribonucleoside triphosphates as substrates. The polypeptide is DNA-directed RNA polymerase subunit Rpo5 (Methanococcoides burtonii (strain DSM 6242 / NBRC 107633 / OCM 468 / ACE-M)).